Here is a 180-residue protein sequence, read N- to C-terminus: ATP synthase subunit delta (180 aa).

This sequence belongs to the ATPase delta chain family. F-type ATPases have 2 components, F(1) - the catalytic core - and F(0) - the membrane proton channel. F(1) has five subunits: alpha(3), beta(3), gamma(1), delta(1), epsilon(1). F(0) has three main subunits: a(1), b(2) and c(10-14). The alpha and beta chains form an alternating ring which encloses part of the gamma chain. F(1) is attached to F(0) by a central stalk formed by the gamma and epsilon chains, while a peripheral stalk is formed by the delta and b chains.

It is found in the cell membrane. Its function is as follows. F(1)F(0) ATP synthase produces ATP from ADP in the presence of a proton or sodium gradient. F-type ATPases consist of two structural domains, F(1) containing the extramembraneous catalytic core and F(0) containing the membrane proton channel, linked together by a central stalk and a peripheral stalk. During catalysis, ATP synthesis in the catalytic domain of F(1) is coupled via a rotary mechanism of the central stalk subunits to proton translocation. In terms of biological role, this protein is part of the stalk that links CF(0) to CF(1). It either transmits conformational changes from CF(0) to CF(1) or is implicated in proton conduction. The sequence is that of ATP synthase subunit delta from Pediococcus pentosaceus (strain ATCC 25745 / CCUG 21536 / LMG 10740 / 183-1w).